We begin with the raw amino-acid sequence, 241 residues long: Large ribosomal subunit protein uL3 (241 aa).

2 disordered regions span residues 139–164 and 215–241; these read VSHRSIGSTGGRQDPGKTFKNKKMPG and DAPKPGKFRLANGGDEVAAPAAEQEGA. The residue at position 151 (Q151) is an N5-methylglutamine.

It belongs to the universal ribosomal protein uL3 family. In terms of assembly, part of the 50S ribosomal subunit. Forms a cluster with proteins L14 and L19. Methylated by PrmB.

One of the primary rRNA binding proteins, it binds directly near the 3'-end of the 23S rRNA, where it nucleates assembly of the 50S subunit. This Rhodopseudomonas palustris (strain BisB5) protein is Large ribosomal subunit protein uL3.